A 2230-amino-acid polypeptide reads, in one-letter code: Probable serine/threonine-protein kinase DDB_G0267686 (2230 aa).

Low complexity predominate over residues 1-12 (MEPNNNISNSNN). Disordered regions lie at residues 1 to 22 (MEPN…GDGK), 121 to 152 (NNNS…QLNN), 270 to 352 (DEKE…DKIS), 368 to 397 (PIIN…RLSS), 430 to 451 (NGAS…ILST), 464 to 574 (KNSS…NSPS), 593 to 620 (GSGS…NSST), 699 to 849 (QHQQ…LLPS), and 915 to 974 (SNQI…SSNS). Basic and acidic residues predominate over residues 270–336 (DEKENKEGGQ…NENEKNHNDK (67 aa)). Positions 337–346 (NDDDDDDEDN) are enriched in acidic residues. Composition is skewed to low complexity over residues 375-388 (SSSN…NNSI), 430-447 (NGAS…GPTP), 473-574 (NNNN…NSPS), 593-602 (GSGSSSLGKG), 610-619 (SYSNNNNNSS), and 699-721 (QHQQ…QQQL). The segment covering 722–731 (KSRSNTTNTP) has biased composition (polar residues). The segment covering 745–754 (NSPPVSPPSS) has biased composition (pro residues). 2 stretches are compositionally biased toward low complexity: residues 755-766 (PMLSPLSSSPPS) and 783-818 (TGSL…RSNS). Residues 840 to 849 (YNTTPPLLPS) are compositionally biased toward polar residues. In terms of domain architecture, RGS spans 991–1119 (SLSALMKDRI…CILHSTTNGT (129 aa)). 8 disordered regions span residues 1146–1181 (SKET…INNN), 1220–1243 (KLSH…NQPL), 1300–1362 (LSPP…GDQT), 1506–1546 (QQQQ…QPQQ), 1563–1611 (PTIP…NNNS), 1725–1771 (VSNN…NNGN), 1802–1848 (NNLM…NNNH), and 1905–1929 (ENNT…TISQ). 2 stretches are compositionally biased toward low complexity: residues 1149–1181 (TSNS…INNN) and 1222–1239 (SHSN…SYTS). Positions 1324–1353 (TNGSMKSSLFQQQLQPTGSINSSPINNHQV) are enriched in polar residues. Low complexity-rich tracts occupy residues 1506–1520 (QQQQ…QFQP) and 1530–1546 (PSSN…QPQQ). Positions 1726–1769 (SNNNNINSNNNNNNNNNNNNNNNNNNNNNNNNNNNNNNNSNNNN) are enriched in low complexity. Low complexity predominate over residues 1905-1915 (ENNTTTTTTTT). Residues 1916 to 1929 (SNRPFRSNNPTISQ) show a composition bias toward polar residues. The Protein kinase domain occupies 1949-2208 (IVFLNKLGEG…SCPEILDSLL (260 aa)). ATP is bound by residues 1955–1963 (LGEGTSAKV) and Lys1976. Residue Asp2069 is the Proton acceptor of the active site.

Belongs to the protein kinase superfamily. TKL Ser/Thr protein kinase family.

The catalysed reaction is L-seryl-[protein] + ATP = O-phospho-L-seryl-[protein] + ADP + H(+). The enzyme catalyses L-threonyl-[protein] + ATP = O-phospho-L-threonyl-[protein] + ADP + H(+). In Dictyostelium discoideum (Social amoeba), this protein is Probable serine/threonine-protein kinase DDB_G0267686.